The following is a 94-amino-acid chain: uncharacterized protein (94 aa).

This is an uncharacterized protein from Bacillus subtilis (strain 168).